Reading from the N-terminus, the 224-residue chain is Synaptonemal complex protein 3 (224 aa).

2 coiled-coil regions span residues 63-97 (RVKCAAQRESLERQLQDLTATDNKLSEQKRDWEER) and 137-171 (HDSMNGQFNSLKNNLDELNIEKKQLEVAIADQSST).

As to quaternary structure, interacts with gras-1. Interacts with brc-1 and brd-1.

It localises to the chromosome. Plays a role in early meiotic events; during prophase I contributes to synaptonemal complex (SC) assembly, synapsis and chiasmata formation and stabilization of homologous chromosomes pairing. Required for restricting SC assembly to bridge paired chromosome axes. Required for the timely progression of meiotic crossover recombination. Required for the synapsis checkpoint. The protein is Synaptonemal complex protein 3 of Caenorhabditis elegans.